Here is a 163-residue protein sequence, read N- to C-terminus: Nucleotide-binding protein MS1759 (163 aa).

The protein belongs to the YajQ family.

Functionally, nucleotide-binding protein. This chain is Nucleotide-binding protein MS1759, found in Mannheimia succiniciproducens (strain KCTC 0769BP / MBEL55E).